The chain runs to 301 residues: Nucleosome assembly protein 1;3 (301 aa).

Positions 15–69 (VETLKNKLQALAEQHVDVLESLAPVVRKRVDVLIEIQSQHDELEAKFLEEKAALE) form a coiled coil. A Nuclear export signal motif is present at residues 36–51 (LAPVVRKRVDVLIEIQ). A disordered region spans residues 278 to 301 (DEDYGASWVDDEEDDDDEYSDEEA).

The protein belongs to the nucleosome assembly protein (NAP) family.

The protein resides in the nucleus. It localises to the cytoplasm. In terms of biological role, may modulate chromatin structure by regulation of nucleosome assembly/disassembly. This Oryza sativa subsp. japonica (Rice) protein is Nucleosome assembly protein 1;3 (NAP1;3).